Reading from the N-terminus, the 64-residue chain is Large ribosomal subunit protein bL33c (64 aa).

It belongs to the bacterial ribosomal protein bL33 family.

It localises to the plastid. Its subcellular location is the chloroplast. The protein is Large ribosomal subunit protein bL33c (rpl33) of Mesostigma viride (Green alga).